Consider the following 189-residue polypeptide: NADH-quinone oxidoreductase subunit B (189 aa).

Residues cysteine 39, cysteine 40, cysteine 104, and cysteine 135 each coordinate [4Fe-4S] cluster.

The protein belongs to the complex I 20 kDa subunit family. NDH-1 is composed of 14 different subunits. Subunits NuoB, C, D, E, F, and G constitute the peripheral sector of the complex. [4Fe-4S] cluster is required as a cofactor.

Its subcellular location is the cell inner membrane. It carries out the reaction a quinone + NADH + 5 H(+)(in) = a quinol + NAD(+) + 4 H(+)(out). Its function is as follows. NDH-1 shuttles electrons from NADH, via FMN and iron-sulfur (Fe-S) centers, to quinones in the respiratory chain. The immediate electron acceptor for the enzyme in this species is believed to be a menaquinone. Couples the redox reaction to proton translocation (for every two electrons transferred, four hydrogen ions are translocated across the cytoplasmic membrane), and thus conserves the redox energy in a proton gradient. In Chlorobium limicola (strain DSM 245 / NBRC 103803 / 6330), this protein is NADH-quinone oxidoreductase subunit B.